The sequence spans 302 residues: Deoxyhypusine hydroxylase (302 aa).

Residue M1 is modified to N-acetylmethionine. HEAT-like PBS-type repeat units lie at residues 54–80, 87–113, 174–200, 205–231, and 238–264; these read LKHE…VLQD, VRHE…YSSD, ERYR…GLHC, FRHE…ALAR, and VRHE…HADD. Fe cation-binding residues include H56, H89, and E90. 3 residues coordinate Fe cation: H207, H240, and E241.

This sequence belongs to the deoxyhypusine hydroxylase family. Fe(2+) is required as a cofactor.

It carries out the reaction [eIF5A protein]-deoxyhypusine + AH2 + O2 = [eIF5A protein]-hypusine + A + H2O. It participates in protein modification; eIF5A hypusination. Its function is as follows. Catalyzes the hydroxylation of the N(6)-(4-aminobutyl)-L-lysine intermediate produced by deoxyhypusine synthase/DHPS on a critical lysine of the eukaryotic translation initiation factor 5A/eIF-5A. This is the second step of the post-translational modification of that lysine into an unusual amino acid residue named hypusine. Hypusination is unique to mature eIF-5A factor and is essential for its function. This is Deoxyhypusine hydroxylase from Homo sapiens (Human).